The following is a 397-amino-acid chain: Elongation factor Tu (397 aa).

Residues 10-206 enclose the tr-type G domain; it reads KPHVNIGTIG…AVDENVPDPE (197 aa). Residues 19–26 are G1; sequence GHVDHGKT. 19 to 26 lines the GTP pocket; that stretch reads GHVDHGKT. Mg(2+) is bound at residue Thr26. Positions 62 to 66 are G2; that stretch reads GITIQ. The tract at residues 83–86 is G3; sequence DAPG. GTP-binding positions include 83–87 and 138–141; these read DAPGH and NKAD. The segment at 138 to 141 is G4; sequence NKAD. A G5 region spans residues 176–178; that stretch reads SAL.

The protein belongs to the TRAFAC class translation factor GTPase superfamily. Classic translation factor GTPase family. EF-Tu/EF-1A subfamily. As to quaternary structure, monomer.

The protein resides in the cytoplasm. The catalysed reaction is GTP + H2O = GDP + phosphate + H(+). GTP hydrolase that promotes the GTP-dependent binding of aminoacyl-tRNA to the A-site of ribosomes during protein biosynthesis. This Saccharopolyspora erythraea (strain ATCC 11635 / DSM 40517 / JCM 4748 / NBRC 13426 / NCIMB 8594 / NRRL 2338) protein is Elongation factor Tu.